The sequence spans 398 residues: ATP-dependent RNA helicase eIF4A (398 aa).

The Q motif signature appears at 25-53 (DSFDAMNLRAELLRGVYAYGFERPSAIQQ). The Helicase ATP-binding domain maps to 56–226 (IMPVIKGSDV…TKFMRDPVRI (171 aa)). 69 to 76 (AQSGTGKT) provides a ligand contact to ATP. Residues 174–177 (DEAD) carry the DEAD box motif. The 162-residue stretch at 237-398 (GIKQFYIAVE…EMPMNVADLI (162 aa)) folds into the Helicase C-terminal domain.

This sequence belongs to the DEAD box helicase family. eIF4A subfamily. In terms of assembly, component of the eIF4F complex, which composition varies with external and internal environmental conditions. It is composed of at least eIF4A, eIF4E and eIF4G.

The protein resides in the cytoplasm. It catalyses the reaction ATP + H2O = ADP + phosphate + H(+). Its function is as follows. ATP-dependent RNA helicase which is a subunit of the eIF4F complex involved in cap recognition and is required for mRNA binding to ribosome. In the current model of translation initiation, eIF4A unwinds RNA secondary structures in the 5'-UTR of mRNAs which is necessary to allow efficient binding of the small ribosomal subunit, and subsequent scanning for the initiator codon. The chain is ATP-dependent RNA helicase eIF4A (TIF1) from Coccidioides immitis (strain RS) (Valley fever fungus).